Reading from the N-terminus, the 386-residue chain is Eukaryotic translation initiation factor 3 subunit M (386 aa).

One can recognise a PCI domain in the interval 181-343 (NSELASKVMI…RKVHISSTMH (163 aa)).

Belongs to the eIF-3 subunit M family. Component of the eukaryotic translation initiation factor 3 (eIF-3) complex.

The protein resides in the cytoplasm. Its function is as follows. Component of the eukaryotic translation initiation factor 3 (eIF-3) complex, which is involved in protein synthesis of a specialized repertoire of mRNAs and, together with other initiation factors, stimulates binding of mRNA and methionyl-tRNAi to the 40S ribosome. The eIF-3 complex specifically targets and initiates translation of a subset of mRNAs involved in cell proliferation. The chain is Eukaryotic translation initiation factor 3 subunit M from Culex quinquefasciatus (Southern house mosquito).